Reading from the N-terminus, the 438-residue chain is Cyanidin-3-O-glucoside 2-O-glucuronosyltransferase (438 aa).

UDP-alpha-D-glucuronate is bound by residues serine 264, 315-316 (WV), 333-341 (HCGWSSTME), and 355-358 (QFDQ).

It belongs to the UDP-glycosyltransferase family. In terms of assembly, monomer. As to expression, expressed in petals. Not detected in sepals, stems, leaves, tubular corollas and white petals.

The protein resides in the cytoplasm. The enzyme catalyses cyanidin 3-O-beta-D-glucoside + UDP-alpha-D-glucuronate = cyanidin 3-O-(2-O-beta-D-glucuronosyl)-beta-D-glucoside + UDP + H(+). Inhibited by copper, mercury, UDP, UTP and partially by calcium, cadmium, iron and UMP. Not affected by cobalt, magnesium, manganese, zinc, nickel, tin, uridine, sadium malonate and glucose. Its function is as follows. Involved in the production of glucuronosylated anthocyanins that are the origin of the red coloration of flowers. Can use cyanidin 3-O-6''-O-malonylglucoside, cyanidin 3-O-glucoside and delphinidin 3-O-glucosideas substrates, but not pelargonidin 3-O-glucoside, cyanidin 3-O-3'',6''-O-dimalonylglucoside, pelargonidin 3,5-O-diglucoside, pelargonidin 3-O-6''-O-malonylglucoside-5-O-glucoside, quercetin 3-O-glucoside, quercetin 3-O-6''-O-malonylglucoside, daidzin, genistin,7-O-6''-O-malonylglucosides of daidzein and genistein, cyanidin, quercetin, daidzein, genistein p-Nitrophenyl beta-D-glucopyranoside, beta-estradiol, 17alpha-estradiol, 1-naphthol, 2-naphthol, 4-methylumbelliferone, and p-nitrophenol. Highly specific for UDP-glucuronate (UDP-GlcUA). Arg-25 is decisive with respect to UDP-sugar specificity. The protein is Cyanidin-3-O-glucoside 2-O-glucuronosyltransferase (UGAT) of Bellis perennis (English daisy).